A 235-amino-acid polypeptide reads, in one-letter code: MWRGRAGALLRVWGFWPTGVPRRRPLSCDAASQAGSNYPRCWNCGGPWGPGREDRFFCPQCRALQAPDPTRDYFSLMDCNRSFRVDTAKLQHRYQQLQRLVHPDFFSQRSQTEKDFSEKHSTLVNDAYKTLLAPLSRGLYLLKLHGIEIPERTDYEMDRQFLIEIMEINEKLAEAESEAAMKEIESIVKAKQKEFTDNVSSAFEQDDFEEAKEILTKMRYFSNIEEKIKLKKIPL.

C41, C44, C58, and C61 together coordinate a divalent metal cation. One can recognise a J domain in the interval 72–144; sequence DYFSLMDCNR…LSRGLYLLKL (73 aa).

Belongs to the HscB family. In terms of assembly, interacts with ISCU and HSPA9 to form an iron-sulfur transfer complex. Interacts with SDHAF1 (via the first LYR motif); the interaction recruits the iron-sulfur transfer complex composed of HSC20, HSPA9 and ISCU and mediates the incorporation of iron-sulfur clusters into SDHB which also interacts with HSC20. Interacts with the cytoplasmic form of ISCU and with CIA complex member CIAO1 (via LYR motif). As to quaternary structure, homodimer. Interacts with ISCU (cytoplasmic form); this interaction stabilizes the (Fe-S) clusters on ISCU. Interacts with the CIA complex member CIAO1 (via LYR motif). As to expression, expressed in lung, brain, stomach, spleen, ovary, testis, liver, muscle and heart.

Its subcellular location is the cytoplasm. It localises to the mitochondrion. It functions in the pathway cofactor biosynthesis; iron-sulfur cluster biosynthesis. Acts as a co-chaperone in iron-sulfur cluster assembly in mitochondria. Required for incorporation of iron-sulfur clusters into SDHB, the iron-sulfur protein subunit of succinate dehydrogenase that is involved in complex II of the mitochondrial electron transport chain. Recruited to SDHB by interaction with SDHAF1 which first binds SDHB and then recruits the iron-sulfur transfer complex formed by HSC20, HSPA9 and ISCU through direct binding to HSC20. Plays an essential role in hematopoiesis. Functionally, acts as a co-chaperone in iron-sulfur cluster assembly in the cytoplasm. Also mediates complex formation between components of the cytosolic iron-sulfur biogenesis pathway and the CIA targeting complex composed of CIAO1, DIPK1B/FAM69B and MMS19 by binding directly to the scaffold protein ISCU and to CIAO1. This facilitates iron-sulfur cluster insertion into a number of cytoplasmic and nuclear proteins including POLD1, ELP3, DPYD and PPAT. The protein is Iron-sulfur cluster co-chaperone protein HscB of Homo sapiens (Human).